We begin with the raw amino-acid sequence, 177 residues long: Peptide methionine sulfoxide reductase MsrA 2 (177 aa).

Residue cysteine 12 is part of the active site.

Belongs to the MsrA Met sulfoxide reductase family.

The catalysed reaction is L-methionyl-[protein] + [thioredoxin]-disulfide + H2O = L-methionyl-(S)-S-oxide-[protein] + [thioredoxin]-dithiol. It carries out the reaction [thioredoxin]-disulfide + L-methionine + H2O = L-methionine (S)-S-oxide + [thioredoxin]-dithiol. Functionally, has an important function as a repair enzyme for proteins that have been inactivated by oxidation. Catalyzes the reversible oxidation-reduction of methionine sulfoxide in proteins to methionine. The polypeptide is Peptide methionine sulfoxide reductase MsrA 2 (Staphylococcus aureus (strain MRSA252)).